The sequence spans 845 residues: MNSAPLNDKLIFHTRRRRKQDALHSPSLNMDKKNDQPTVEIKNKVSENETDTVPRRDSQFNETSNLKNEPKVVNHNINMNDNLLIPVDPIIGKIKGNALHKMIIGNSVPDIGLTMPEEITQIMLSQNIDKKLNVTPVSQVTIVNPNKWNGFVLCHPGSSQHNDNNHVYTGNKFFVIYKRSNVMNNEQEINQFANDGIIILINKKEFKPKERDYQMRLFDSCSNVIVVEDEVDFDELSNVKICFSYEELTSASSLLPSHKKLIKYSCWPSNMVFPELKLINDYFSDLQSSVLNDLCLDESDGISTLFVVTNHVFAEQSDAIIESIHGHVLKDKIISKINSMFEKFEQRESRHIAFFGVVTTDEGNGNIHNKFLKNNCLIVMMNPLILTTYEKDYWNGLFSHFNKFIIESCVLSVYIAELIQVELLHGKAIKMLKQFFEAYGCTVLFECCETSKREEIGETSMSKSFDVECDTKKAGIEIQDNNINKRCDDNPNDDDGLDNYYVTDIDETEEDVEAIQKNSKCDDILTSDLRKLLKPSTLGLEVTIPEPSYAATEAEVEDQNSERNDDNALNESLCTEQQDDETVIVERNEEVENGISDDKYISCSYRDFINSETLKTHAHRFLSEQRFERENLEQIIEQLNCTVDELRQNSDSLIKELDDQKRLHSDAVDAYVEQVDVVKNKEIEYESRIAELEHELDELKKSNEHTRPSNANLECFQEGKNEYGVPELFAPFLRELKSLKETCPHLYDGECIQFENSENFLKFAIAKIQYMKLFATSKIKIQPAMLIGTGLMLSNESFNINGVLIQSSFDVNALRLLNVAQGESIEHSSGAMSVANFIKQFWSCV.

Disordered regions lie at residues 17–37 and 550–573; these read RRKQDALHSPSLNMDKKNDQP and AATEAEVEDQNSERNDDNALNESL. A coiled-coil region spans residues 622 to 707; the sequence is LSEQRFEREN…ELKKSNEHTR (86 aa).

This is an uncharacterized protein from Saccharum officinarum (Sugarcane).